The primary structure comprises 272 residues: NH(3)-dependent NAD(+) synthetase (272 aa).

45-52 (GISGGQDS) is an ATP binding site. Residue Asp51 coordinates Mg(2+). Arg138 contacts deamido-NAD(+). Thr158 lines the ATP pocket. Position 163 (Glu163) interacts with Mg(2+). Deamido-NAD(+)-binding residues include Lys171 and Asp178. The ATP site is built by Lys187 and Thr209. 258 to 259 (HK) contributes to the deamido-NAD(+) binding site.

Belongs to the NAD synthetase family. As to quaternary structure, homodimer.

The enzyme catalyses deamido-NAD(+) + NH4(+) + ATP = AMP + diphosphate + NAD(+) + H(+). The protein operates within cofactor biosynthesis; NAD(+) biosynthesis; NAD(+) from deamido-NAD(+) (ammonia route): step 1/1. Catalyzes the ATP-dependent amidation of deamido-NAD to form NAD. Uses ammonia as a nitrogen source. In Bacillus velezensis (strain DSM 23117 / BGSC 10A6 / LMG 26770 / FZB42) (Bacillus amyloliquefaciens subsp. plantarum), this protein is NH(3)-dependent NAD(+) synthetase.